The chain runs to 32 residues: Beta-amanitin proprotein (32 aa).

Residues 1 to 10 constitute a propeptide that is removed on maturation; the sequence is MSDINATRLP. The cyclopeptide (Ile-Pro) cross-link spans 11–18; the sequence is IWGIGCDP. Residues 12–16 constitute a cross-link (2'-cysteinyl-6'-hydroxytryptophan sulfoxide (Trp-Cys)); it reads WGIGC. The propeptide occupies 19-32; the sequence is CIGDDVTILLTRGE.

The protein belongs to the MSDIN fungal toxin family. In terms of processing, processed by the macrocyclase-peptidase enzyme POPB to yield a toxic cyclic decapeptide. POPB first removes 10 residues from the N-terminus. Conformational trapping of the remaining peptide forces the enzyme to release this intermediate rather than proceed to macrocyclization. The enzyme rebinds the remaining peptide in a different conformation and catalyzes macrocyclization of the N-terminal 8 residues.

Functionally, toxin belonging to the bicyclic octapeptides amatoxins that acts by binding non-competitively to RNA polymerase II and greatly slowing the elongation of transcripts from target promoters. The polypeptide is Beta-amanitin proprotein (Amanita phalloides (Death cap)).